A 215-amino-acid polypeptide reads, in one-letter code: Redox-sensing transcriptional repressor Rex (215 aa).

The segment at residues 18–57 is a DNA-binding region (H-T-H motif); sequence LYHRYLKYLDESGKERVSSAELSEAVKVDSATIRRDFSYF. 92–97 lines the NAD(+) pocket; the sequence is GVGNLG.

This sequence belongs to the transcriptional regulatory Rex family. As to quaternary structure, homodimer.

It localises to the cytoplasm. Its function is as follows. Modulates transcription in response to changes in cellular NADH/NAD(+) redox state. The sequence is that of Redox-sensing transcriptional repressor Rex from Listeria innocua serovar 6a (strain ATCC BAA-680 / CLIP 11262).